Here is an 875-residue protein sequence, read N- to C-terminus: Probable ATP-dependent RNA helicase DDX10 (875 aa).

Positions 1–43 (MGKTANSPGSGARPDPVRSFNRWKKKHSHRQNKKKQLRKQLKK) are disordered. Thr-4 is modified (phosphothreonine). Ser-7 bears the Phosphoserine mark. Positions 21–41 (NRWKKKHSHRQNKKKQLRKQL) are enriched in basic residues. The short motif at 69–97 (TRFSDFPLSKKTLKGLQEAQYRLVTEIQK) is the Q motif element. ATP is bound by residues 89–91 (YRL), Gln-96, and 113–120 (AKTGSGKT). Residues 100-274 (IGLALQGKDV…RLSLKNPEYV (175 aa)) form the Helicase ATP-binding domain. The DEAD box motif lies at 222–225 (DEAD). The region spanning 287–448 (TLEQNYIVCE…EIKINPEKLI (162 aa)) is the Helicase C-terminal domain. A Phosphoserine modification is found at Ser-539. Lys-555 is modified (N6-acetyllysine). Residues 562–631 (GGKRLEGTEH…QFLDRDEEEE (70 aa)) form a disordered region. The segment covering 564 to 575 (KRLEGTEHRQDN) has biased composition (basic and acidic residues). At Thr-577 the chain carries Phosphothreonine. Residues 577–593 (TGNEEQEEEEDDEEEME) show a composition bias toward acidic residues. The span at 603-613 (QAPSLPNTSEA) shows a compositional bias: polar residues. Lys-649 participates in a covalent cross-link: Glycyl lysine isopeptide (Lys-Gly) (interchain with G-Cter in SUMO2). Residues 703 to 850 (MQKSAIKDAE…HNRKKARWDT (148 aa)) form a disordered region. Positions 727–741 (ERLQEEDKFDKEEYR) are enriched in basic and acidic residues. Basic residues predominate over residues 742–751 (KKIKAKHREK). Over residues 752–771 (RLKEREARREANKRQAKAKD) the composition is skewed to basic and acidic residues. The span at 772–790 (EEEAFLDWSDDDDDDDDGF) shows a compositional bias: acidic residues. Ser-780 is subject to Phosphoserine. The segment covering 812 to 821 (MENKISDTKK) has biased composition (basic and acidic residues). Residue Ser-831 is modified to Phosphoserine.

The protein belongs to the DEAD box helicase family. DDX10/DBP4 subfamily. In terms of assembly, interacts with AIM2; this interaction promotes AIM2 stability. Interacts with SCNA; this interaction causes DDX10 mislocalization to the nucleoplasm and cytoplasmic inclusions. As to expression, high in testis but widely expressed.

It localises to the cytoplasm. The protein localises to the nucleus. It is found in the nucleolus. It carries out the reaction ATP + H2O = ADP + phosphate + H(+). In terms of biological role, putative ATP-dependent RNA helicase that plays various role in innate immunity or inflammation. Plays a role in the enhancement of AIM2-induced inflammasome activation by interacting with AIM2 and stabilizing its protein level. Negatively regulates viral infection by promoting interferon beta production and interferon stimulated genes/ISGs expression. This Homo sapiens (Human) protein is Probable ATP-dependent RNA helicase DDX10 (DDX10).